A 140-amino-acid polypeptide reads, in one-letter code: ATP synthase epsilon chain (140 aa).

Belongs to the ATPase epsilon chain family. In terms of assembly, F-type ATPases have 2 components, CF(1) - the catalytic core - and CF(0) - the membrane proton channel. CF(1) has five subunits: alpha(3), beta(3), gamma(1), delta(1), epsilon(1). CF(0) has three main subunits: a, b and c.

The protein resides in the cell inner membrane. Functionally, produces ATP from ADP in the presence of a proton gradient across the membrane. This is ATP synthase epsilon chain from Herminiimonas arsenicoxydans.